The sequence spans 554 residues: CTP synthase (554 aa).

The tract at residues 1–265 (MTPLIFVTGG…DELVIVQFKL (265 aa)) is amidoligase domain. CTP is bound at residue Ser-13. Ser-13 contacts UTP. ATP-binding positions include 14-19 (SLGKGI) and Asp-71. Positions 71 and 139 each coordinate Mg(2+). Residues 146–148 (DIE), 186–191 (KTKPTQ), and Lys-222 contribute to the CTP site. UTP-binding positions include 186–191 (KTKPTQ) and Lys-222. Residues 292–545 (TIAVVGKYVD…VRAAREKKAG (254 aa)) enclose the Glutamine amidotransferase type-1 domain. Gly-353 is a binding site for L-glutamine. Cys-380 (nucleophile; for glutamine hydrolysis) is an active-site residue. L-glutamine-binding positions include 381-384 (YGMQ), Glu-404, and Arg-471. Catalysis depends on residues His-518 and Glu-520.

The protein belongs to the CTP synthase family. As to quaternary structure, homotetramer.

The catalysed reaction is UTP + L-glutamine + ATP + H2O = CTP + L-glutamate + ADP + phosphate + 2 H(+). It catalyses the reaction L-glutamine + H2O = L-glutamate + NH4(+). It carries out the reaction UTP + NH4(+) + ATP = CTP + ADP + phosphate + 2 H(+). It functions in the pathway pyrimidine metabolism; CTP biosynthesis via de novo pathway; CTP from UDP: step 2/2. Allosterically activated by GTP, when glutamine is the substrate; GTP has no effect on the reaction when ammonia is the substrate. The allosteric effector GTP functions by stabilizing the protein conformation that binds the tetrahedral intermediate(s) formed during glutamine hydrolysis. Inhibited by the product CTP, via allosteric rather than competitive inhibition. Its function is as follows. Catalyzes the ATP-dependent amination of UTP to CTP with either L-glutamine or ammonia as the source of nitrogen. Regulates intracellular CTP levels through interactions with the four ribonucleotide triphosphates. The protein is CTP synthase of Xanthomonas oryzae pv. oryzae (strain MAFF 311018).